The chain runs to 299 residues: tRNA dimethylallyltransferase (299 aa).

10 to 17 (GPTASGKS) is an ATP binding site. Residue 12 to 17 (TASGKS) participates in substrate binding.

Belongs to the IPP transferase family. Monomer. Mg(2+) is required as a cofactor.

The catalysed reaction is adenosine(37) in tRNA + dimethylallyl diphosphate = N(6)-dimethylallyladenosine(37) in tRNA + diphosphate. In terms of biological role, catalyzes the transfer of a dimethylallyl group onto the adenine at position 37 in tRNAs that read codons beginning with uridine, leading to the formation of N6-(dimethylallyl)adenosine (i(6)A). The chain is tRNA dimethylallyltransferase from Malacoplasma penetrans (strain HF-2) (Mycoplasma penetrans).